An 82-amino-acid chain; its full sequence is Putative Fe(2+) transport protein A (82 aa).

The protein belongs to the FeoA family.

Might be involved in Fe(2+) ion uptake. The sequence is that of Putative Fe(2+) transport protein A from Methanocaldococcus jannaschii (strain ATCC 43067 / DSM 2661 / JAL-1 / JCM 10045 / NBRC 100440) (Methanococcus jannaschii).